Here is a 74-residue protein sequence, read N- to C-terminus: Dermaseptin-B3 (74 aa).

The signal sequence occupies residues 1–22 (MAFLKKSVFLVLFLGLVSLSIC). The propeptide occupies 23-43 (EEEKREEENEEKQEDDEQSEE).

Expressed by the skin glands.

The protein resides in the secreted. Its function is as follows. Possesses a potent antimicrobial activity against Gram-positive and Gram-negative bacteria. Probably acts by disturbing membrane functions with its amphipathic structure. This is Dermaseptin-B3 from Phyllomedusa bicolor (Two-colored leaf frog).